A 171-amino-acid chain; its full sequence is Adenine phosphoribosyltransferase (171 aa).

Belongs to the purine/pyrimidine phosphoribosyltransferase family. As to quaternary structure, homodimer.

It is found in the cytoplasm. It catalyses the reaction AMP + diphosphate = 5-phospho-alpha-D-ribose 1-diphosphate + adenine. The protein operates within purine metabolism; AMP biosynthesis via salvage pathway; AMP from adenine: step 1/1. Functionally, catalyzes a salvage reaction resulting in the formation of AMP, that is energically less costly than de novo synthesis. This is Adenine phosphoribosyltransferase from Citrifermentans bemidjiense (strain ATCC BAA-1014 / DSM 16622 / JCM 12645 / Bem) (Geobacter bemidjiensis).